Here is a 296-residue protein sequence, read N- to C-terminus: L-ornithine N(alpha)-acyltransferase (296 aa).

It belongs to the acetyltransferase family. OlsB subfamily.

It carries out the reaction a (3R)-hydroxyacyl-[ACP] + L-ornithine = a lyso-ornithine lipid + holo-[ACP] + H(+). It functions in the pathway lipid metabolism. In terms of biological role, catalyzes the first step in the biosynthesis of ornithine lipids, which are phosphorus-free membrane lipids. Catalyzes the 3-hydroxyacyl-acyl carrier protein-dependent acylation of ornithine to form lyso-ornithine lipid (LOL). The sequence is that of L-ornithine N(alpha)-acyltransferase from Rhizobium meliloti (strain 1021) (Ensifer meliloti).